The chain runs to 299 residues: MKTNMLTNNCKDKIFIKKSHTILRLLYFFKSLAMILFFIFFSLTSYAKPKIVVSITPISSILAMLVKDKVDIESLAVNNECPHHHNIKPSDITKVRNADMVIYINEQFDGFTEKLISNNNQNIIKISDIKSLTTIKNNWHIWLDLNNAKILLQEFAQIFIKNFPQLQKEINNNLPIALKELNKLQDIKNNEFRTIKDIILLSDSSEYFFLNTNIKTAKLYRESQKSLRYISKLEELIKGSNNKCIVLSNKQKSQLYTKLNAKTKIIILNSENWNVKNINSNTFQDQYLQMINQVKKCIH.

A helical transmembrane segment spans residues 25 to 45; it reads LLYFFKSLAMILFFIFFSLTS.

The protein resides in the membrane. This is an uncharacterized protein from Rickettsia prowazekii (strain Madrid E).